The chain runs to 160 residues: 6,7-dimethyl-8-ribityllumazine synthase (160 aa).

5-amino-6-(D-ribitylamino)uracil is bound by residues Trp28, 59 to 61 (SFE), and 82 to 84 (VII). 87–88 (GT) contacts (2S)-2-hydroxy-3-oxobutyl phosphate. The active-site Proton donor is His90. Position 115 (Phe115) interacts with 5-amino-6-(D-ribitylamino)uracil. Arg129 serves as a coordination point for (2S)-2-hydroxy-3-oxobutyl phosphate.

This sequence belongs to the DMRL synthase family.

The enzyme catalyses (2S)-2-hydroxy-3-oxobutyl phosphate + 5-amino-6-(D-ribitylamino)uracil = 6,7-dimethyl-8-(1-D-ribityl)lumazine + phosphate + 2 H2O + H(+). Its pathway is cofactor biosynthesis; riboflavin biosynthesis; riboflavin from 2-hydroxy-3-oxobutyl phosphate and 5-amino-6-(D-ribitylamino)uracil: step 1/2. Its function is as follows. Catalyzes the formation of 6,7-dimethyl-8-ribityllumazine by condensation of 5-amino-6-(D-ribitylamino)uracil with 3,4-dihydroxy-2-butanone 4-phosphate. This is the penultimate step in the biosynthesis of riboflavin. This Clavibacter michiganensis subsp. michiganensis (strain NCPPB 382) protein is 6,7-dimethyl-8-ribityllumazine synthase.